The following is a 452-amino-acid chain: UDP-N-acetylmuramoylalanine--D-glutamate ligase (452 aa).

119–125 (GSNGKTT) contacts ATP.

Belongs to the MurCDEF family.

The protein localises to the cytoplasm. The enzyme catalyses UDP-N-acetyl-alpha-D-muramoyl-L-alanine + D-glutamate + ATP = UDP-N-acetyl-alpha-D-muramoyl-L-alanyl-D-glutamate + ADP + phosphate + H(+). The protein operates within cell wall biogenesis; peptidoglycan biosynthesis. In terms of biological role, cell wall formation. Catalyzes the addition of glutamate to the nucleotide precursor UDP-N-acetylmuramoyl-L-alanine (UMA). The protein is UDP-N-acetylmuramoylalanine--D-glutamate ligase of Streptococcus pyogenes serotype M6 (strain ATCC BAA-946 / MGAS10394).